The primary structure comprises 429 residues: Serine--tRNA ligase (429 aa).

An L-serine-binding site is contributed by 236–238; the sequence is TGE. 267 to 269 is a binding site for ATP; the sequence is RSE. Glu-290 provides a ligand contact to L-serine. An ATP-binding site is contributed by 354–357; that stretch reads EISS. Ser-390 is a binding site for L-serine.

It belongs to the class-II aminoacyl-tRNA synthetase family. Type-1 seryl-tRNA synthetase subfamily. Homodimer. The tRNA molecule binds across the dimer.

It is found in the cytoplasm. The enzyme catalyses tRNA(Ser) + L-serine + ATP = L-seryl-tRNA(Ser) + AMP + diphosphate + H(+). It carries out the reaction tRNA(Sec) + L-serine + ATP = L-seryl-tRNA(Sec) + AMP + diphosphate + H(+). Its pathway is aminoacyl-tRNA biosynthesis; selenocysteinyl-tRNA(Sec) biosynthesis; L-seryl-tRNA(Sec) from L-serine and tRNA(Sec): step 1/1. Functionally, catalyzes the attachment of serine to tRNA(Ser). Is also able to aminoacylate tRNA(Sec) with serine, to form the misacylated tRNA L-seryl-tRNA(Sec), which will be further converted into selenocysteinyl-tRNA(Sec). The polypeptide is Serine--tRNA ligase (Vesicomyosocius okutanii subsp. Calyptogena okutanii (strain HA)).